Reading from the N-terminus, the 276-residue chain is Diaminopimelate epimerase (276 aa).

The substrate site is built by Asn13, Gln46, and Asn66. Cys75 serves as the catalytic Proton donor. Substrate contacts are provided by residues 76-77 (GN), Asn159, Asn192, and 210-211 (ER). Cys219 serves as the catalytic Proton acceptor. 220 to 221 (GT) contacts substrate.

It belongs to the diaminopimelate epimerase family. Homodimer.

It is found in the cytoplasm. The catalysed reaction is (2S,6S)-2,6-diaminopimelate = meso-2,6-diaminopimelate. The protein operates within amino-acid biosynthesis; L-lysine biosynthesis via DAP pathway; DL-2,6-diaminopimelate from LL-2,6-diaminopimelate: step 1/1. Its function is as follows. Catalyzes the stereoinversion of LL-2,6-diaminopimelate (L,L-DAP) to meso-diaminopimelate (meso-DAP), a precursor of L-lysine and an essential component of the bacterial peptidoglycan. The sequence is that of Diaminopimelate epimerase from Pseudomonas savastanoi pv. phaseolicola (strain 1448A / Race 6) (Pseudomonas syringae pv. phaseolicola (strain 1448A / Race 6)).